We begin with the raw amino-acid sequence, 297 residues long: Ribosomal RNA small subunit methyltransferase H (297 aa).

S-adenosyl-L-methionine-binding positions include 37-39 (GGH), glutamate 56, phenylalanine 87, aspartate 102, and histidine 109.

Belongs to the methyltransferase superfamily. RsmH family.

It localises to the cytoplasm. The enzyme catalyses cytidine(1402) in 16S rRNA + S-adenosyl-L-methionine = N(4)-methylcytidine(1402) in 16S rRNA + S-adenosyl-L-homocysteine + H(+). In terms of biological role, specifically methylates the N4 position of cytidine in position 1402 (C1402) of 16S rRNA. The chain is Ribosomal RNA small subunit methyltransferase H from Borrelia hermsii (strain HS1 / DAH).